The primary structure comprises 214 residues: Phosphoenolpyruvate guanylyltransferase (214 aa).

Positions 139, 155, and 158 each coordinate phosphoenolpyruvate.

Belongs to the CofC family.

It catalyses the reaction phosphoenolpyruvate + GTP + H(+) = enolpyruvoyl-2-diphospho-5'-guanosine + diphosphate. The protein operates within cofactor biosynthesis; coenzyme F420 biosynthesis. In terms of biological role, guanylyltransferase that catalyzes the activation of phosphoenolpyruvate (PEP) as enolpyruvoyl-2-diphospho-5'-guanosine, via the condensation of PEP with GTP. It is involved in the biosynthesis of coenzyme F420, a hydride carrier cofactor. In Salinispora arenicola (strain CNS-205), this protein is Phosphoenolpyruvate guanylyltransferase.